A 915-amino-acid polypeptide reads, in one-letter code: p53-induced death domain-containing protein 1 (915 aa).

Ala2 is subject to N-acetylalanine. 7 LRR repeats span residues 131-152 (CLAH…VPEL), 154-176 (GLDA…GALP), 177-199 (ALTF…GSLS), 200-221 (TLQR…IGNL), 223-245 (SLSE…AGLR), 246-268 (SLRL…VHLP), and 269-290 (LITR…LLDA). At Ser304 the chain carries Phosphoserine. 2 consecutive ZU5 domains span residues 327–459 (DLDS…VLRP) and 460–601 (VSNT…WYTT). 2 peptidase S68 regions span residues 428–457 (DLET…LVVL) and 571–599 (DITT…WLWY). Residues His449, Ser451, His591, and Ser593 contribute to the active site. The UPA domain stretch occupies residues 585–721 (ARFQVTHFSW…TTALDREAQD (137 aa)). A Death domain is found at 793–878 (TQSNLLSVAS…DVAEEVRAIL (86 aa)). The disordered stretch occupies residues 888 to 915 (SIRRTGLAPEDSTLPGTSASQTPESAQA). Residues 901–915 (LPGTSASQTPESAQA) show a composition bias toward polar residues.

In terms of assembly, forms a complex named the PIDDosome with CASP2 and CRADD. Forms a complex with IKBKG and RIPK1. Interacts with FADD and MADD. Post-translationally, undergoes autoproteolytic processing whose extent either directs cells towards survival or apoptotic pathways. Autoproteolytically cleaved into two main fragments PIDD-N and PIDD-C. PIDD-C can be further processed into PIDD-CC, a processing which is enhanced by DNA damage. The cleavage producing PIDD-C is required for translocation of PIDD1 to the nucleus upon DNA damage and activation of NF-kappa-B. PIDD-CC mediates the interaction with CRADD and the cleavage producing PIDD-CC is required for the activation of CASP2. PIDD-N remains associated with PIDD-C and PIDD-CC after cleavage. In terms of tissue distribution, ubiquitous.

It localises to the cytoplasm. Its subcellular location is the nucleus. Functionally, component of the DNA damage/stress response pathway that functions downstream of p53/TP53 and can either promote cell survival or apoptosis. Associated with CRADD and the CASP2 caspase, it forms the PIDDosome a complex that activates CASP2 and triggers apoptosis. Associated with IKBKG and RIPK1, it enhances sumoylation and ubiquitination of IKBKG which is important for activation of the transcription factor NF-kappa-B. The chain is p53-induced death domain-containing protein 1 from Mus musculus (Mouse).